The following is a 275-amino-acid chain: NH(3)-dependent NAD(+) synthetase (275 aa).

Position 46 to 53 (46 to 53 (GISGGQDS)) interacts with ATP. A Mg(2+)-binding site is contributed by Asp-52. Arg-140 is a binding site for deamido-NAD(+). Residue Thr-160 participates in ATP binding. Glu-165 provides a ligand contact to Mg(2+). The deamido-NAD(+) site is built by Lys-173 and Asp-180. Residues Lys-189 and Thr-211 each coordinate ATP. 260–261 (HK) is a binding site for deamido-NAD(+).

Belongs to the NAD synthetase family. Homodimer.

The catalysed reaction is deamido-NAD(+) + NH4(+) + ATP = AMP + diphosphate + NAD(+) + H(+). The protein operates within cofactor biosynthesis; NAD(+) biosynthesis; NAD(+) from deamido-NAD(+) (ammonia route): step 1/1. Catalyzes the ATP-dependent amidation of deamido-NAD to form NAD. Uses ammonia as a nitrogen source. This chain is NH(3)-dependent NAD(+) synthetase, found in Escherichia coli O139:H28 (strain E24377A / ETEC).